The primary structure comprises 148 residues: Small ribosomal subunit protein eS6 (148 aa).

Belongs to the eukaryotic ribosomal protein eS6 family.

This Pyrobaculum arsenaticum (strain DSM 13514 / JCM 11321 / PZ6) protein is Small ribosomal subunit protein eS6.